The sequence spans 92 residues: MVRSVWKGPFVEASLLKKADAARASGRHDVIKIWSRRSTILPQFVGLTFGVYNGQKHVPVAVNEEMVGHKFGEFSPTRTFHGHSGDKKAKKA.

It belongs to the universal ribosomal protein uS19 family.

Functionally, protein S19 forms a complex with S13 that binds strongly to the 16S ribosomal RNA. This Bradyrhizobium sp. (strain BTAi1 / ATCC BAA-1182) protein is Small ribosomal subunit protein uS19.